A 347-amino-acid polypeptide reads, in one-letter code: Protein RecA (347 aa).

ATP is bound at residue 67–74; it reads GPESSGKT. The disordered stretch occupies residues 326–347; it reads DKLLPGRAPSSEAQGTESGQEA. The segment covering 336 to 347 has biased composition (polar residues); that stretch reads SEAQGTESGQEA.

This sequence belongs to the RecA family.

The protein localises to the cytoplasm. Can catalyze the hydrolysis of ATP in the presence of single-stranded DNA, the ATP-dependent uptake of single-stranded DNA by duplex DNA, and the ATP-dependent hybridization of homologous single-stranded DNAs. It interacts with LexA causing its activation and leading to its autocatalytic cleavage. The sequence is that of Protein RecA from Alkalilimnicola ehrlichii (strain ATCC BAA-1101 / DSM 17681 / MLHE-1).